Here is a 213-residue protein sequence, read N- to C-terminus: Pyridoxine/pyridoxamine 5'-phosphate oxidase (213 aa).

Residues 8 to 11 (RKNY) and Lys66 each bind substrate. FMN is bound by residues 61 to 66 (RIVLIK), 76 to 77 (FT), Arg82, Lys83, and Gln105. Residues Tyr123, Arg127, and Ser131 each coordinate substrate. Residues 140–141 (QS) and Trp184 contribute to the FMN site. 190 to 192 (RLH) provides a ligand contact to substrate. Residue Arg194 coordinates FMN.

This sequence belongs to the pyridoxamine 5'-phosphate oxidase family. Homodimer. The cofactor is FMN.

It carries out the reaction pyridoxamine 5'-phosphate + O2 + H2O = pyridoxal 5'-phosphate + H2O2 + NH4(+). It catalyses the reaction pyridoxine 5'-phosphate + O2 = pyridoxal 5'-phosphate + H2O2. Its pathway is cofactor metabolism; pyridoxal 5'-phosphate salvage; pyridoxal 5'-phosphate from pyridoxamine 5'-phosphate: step 1/1. It functions in the pathway cofactor metabolism; pyridoxal 5'-phosphate salvage; pyridoxal 5'-phosphate from pyridoxine 5'-phosphate: step 1/1. In terms of biological role, catalyzes the oxidation of either pyridoxine 5'-phosphate (PNP) or pyridoxamine 5'-phosphate (PMP) into pyridoxal 5'-phosphate (PLP). In Paraburkholderia xenovorans (strain LB400), this protein is Pyridoxine/pyridoxamine 5'-phosphate oxidase.